We begin with the raw amino-acid sequence, 1025 residues long: Multidrug resistance protein MdtC (1025 aa).

12 consecutive transmembrane segments (helical) span residues 3 to 23, 333 to 353, 360 to 380, 387 to 407, 431 to 451, 463 to 483, 528 to 548, 853 to 873, 875 to 895, 897 to 917, 953 to 973, and 984 to 1004; these read FFAL…AITL, EVEQ…FLFL, IIPA…MYLC, LSLM…IVVL, VGFT…PLLL, FAVT…TLTP, LVGV…ISIP, VILI…LYES, VHPL…LLAL, LFNA…IGIV, PIMM…LSGG, and ITIV…TPVV.

Belongs to the resistance-nodulation-cell division (RND) (TC 2.A.6) family. MdtC subfamily. In terms of assembly, part of a tripartite efflux system composed of MdtA, MdtB and MdtC. MdtC forms a heteromultimer with MdtB.

The protein resides in the cell inner membrane. In terms of biological role, the MdtABC tripartite complex confers resistance against novobiocin and deoxycholate. The polypeptide is Multidrug resistance protein MdtC (Escherichia coli (strain UTI89 / UPEC)).